A 294-amino-acid polypeptide reads, in one-letter code: 4-hydroxy-tetrahydrodipicolinate synthase (294 aa).

Thr44 contacts pyruvate. Tyr132 acts as the Proton donor/acceptor in catalysis. Residue Lys161 is the Schiff-base intermediate with substrate of the active site. Residue Ile206 participates in pyruvate binding.

Belongs to the DapA family. As to quaternary structure, homotetramer; dimer of dimers.

It is found in the cytoplasm. It carries out the reaction L-aspartate 4-semialdehyde + pyruvate = (2S,4S)-4-hydroxy-2,3,4,5-tetrahydrodipicolinate + H2O + H(+). Its pathway is amino-acid biosynthesis; L-lysine biosynthesis via DAP pathway; (S)-tetrahydrodipicolinate from L-aspartate: step 3/4. In terms of biological role, catalyzes the condensation of (S)-aspartate-beta-semialdehyde [(S)-ASA] and pyruvate to 4-hydroxy-tetrahydrodipicolinate (HTPA). The chain is 4-hydroxy-tetrahydrodipicolinate synthase from Thermotoga neapolitana (strain ATCC 49049 / DSM 4359 / NBRC 107923 / NS-E).